The sequence spans 183 residues: Nascent polypeptide-associated complex subunit beta (183 aa).

Residues Gly62–Val127 enclose the NAC-A/B domain. A disordered region spans residues Gln150–Glu183. Residues Glu164–Glu183 are compositionally biased toward acidic residues.

Belongs to the NAC-beta family. In terms of assembly, part of the nascent polypeptide-associated complex (NAC), consisting of egd2 and egd1. NAC associates with ribosomes via egd1.

It is found in the cytoplasm. The protein localises to the nucleus. Component of the nascent polypeptide-associated complex (NAC), a dynamic component of the ribosomal exit tunnel, protecting the emerging polypeptides from interaction with other cytoplasmic proteins to ensure appropriate nascent protein targeting. The NAC complex also promotes mitochondrial protein import by enhancing productive ribosome interactions with the outer mitochondrial membrane and blocks the inappropriate interaction of ribosomes translating non-secretory nascent polypeptides with translocation sites in the membrane of the endoplasmic reticulum. EGD1 may act as a transcription factor that exert a negative effect on the expression of several genes that are transcribed by RNA polymerase II. The chain is Nascent polypeptide-associated complex subunit beta (egd1) from Neosartorya fischeri (strain ATCC 1020 / DSM 3700 / CBS 544.65 / FGSC A1164 / JCM 1740 / NRRL 181 / WB 181) (Aspergillus fischerianus).